The primary structure comprises 403 residues: Palmitoyltransferase ZDHHC23-A (403 aa).

The Cytoplasmic segment spans residues 1–70 (MKRERFKPPE…ADRLGVSCCT (70 aa)). A helical membrane pass occupies residues 71–91 (VGPLRLELSVLPPMVLIPGLL). Position 92 (Arg-92) is a topological domain, lumenal. Residues 93–113 (VAAINCLLGVIILTALPLLVL) traverse the membrane as a helical segment. Residues 114–125 (WYYYMTHRRKRR) lie on the Cytoplasmic side of the membrane. A helical membrane pass occupies residues 126–146 (TLFFLSLALFSLAYMYYLFLT). At 147–153 (EIVPRGD) the chain is on the lumenal side. Residues 154 to 174 (VTHLQVVTATTGMMLTLISLV) form a helical membrane-spanning segment. At 175 to 268 (RTKQGPGFVK…NSCVGQANHR (94 aa)) the chain is on the cytoplasmic side. Residues 225–275 (KKCPVCQLVRPPRAGHCRICGACVLRMDHHCVWINSCVGQANHRQFILTLL) enclose the DHHC domain. Cys-255 serves as the catalytic S-palmitoyl cysteine intermediate. A helical membrane pass occupies residues 269-289 (QFILTLLLFLLTSFYGISLVL). Residues 290-319 (RSICPKQSLFTAMLYCPGVYNQYSTALCFT) are Lumenal-facing. Residues 320-340 (CVWYSVIITGGLLHLFILQII) traverse the membrane as a helical segment. Over 341–403 (NVSCNVTERE…GSSLNLTDMV (63 aa)) the chain is Cytoplasmic.

It belongs to the DHHC palmitoyltransferase family.

The protein resides in the golgi apparatus membrane. It is found in the golgi apparatus. The protein localises to the trans-Golgi network membrane. It carries out the reaction L-cysteinyl-[protein] + hexadecanoyl-CoA = S-hexadecanoyl-L-cysteinyl-[protein] + CoA. Its function is as follows. Palmitoyltransferase that could catalyze the addition of palmitate onto various protein substrates and be involved in a variety of cellular processes. The polypeptide is Palmitoyltransferase ZDHHC23-A (zdhhc23a) (Danio rerio (Zebrafish)).